Consider the following 642-residue polypeptide: Forkhead box protein K2 (642 aa).

The region spanning 30–91 (VTIGRNSSQG…NGVFVDGVFQ (62 aa)) is the FHA domain. A disordered region spans residues 201–221 (QSENDKDASGGDSPKDDSKPP). Residues 203–219 (ENDKDASGGDSPKDDSK) show a composition bias toward basic and acidic residues. A DNA-binding region (fork-head) is located at residues 219–314 (KPPYSYAQLI…EQAFRKRRPR (96 aa)). The segment at 261–279 (KGWQNSIRHNLSLNRYFIK) is DNA-binding; major groove. Mg(2+)-binding residues include Leu271, Ser272, Asn274, and Phe277. 2 DNA-binding; minor groove regions span residues 289–293 (KGSFW) and 309–314 (RKRRPR). 2 disordered regions span residues 323 to 359 (LGPLSSRSAPASPNHSGVFSAHSSGVQTPESLSREGS) and 589 to 615 (ASASLPTKRQNGDQSEQPDIKRGKTDE). 2 stretches are compositionally biased toward polar residues: residues 327 to 353 (SSRSAPASPNHSGVFSAHSSGVQTPES) and 589 to 605 (ASASLPTKRQNGDQSEQ). Residues 606-615 (PDIKRGKTDE) are compositionally biased toward basic and acidic residues.

In neurula embryos, expressed strongly in the future floor plate and weakly in the neural crest progenitor cells. As development progresses, expression becomes stronger in neural crest cells. At stage 24, expressed in the eye, brain, branchial arches and in the presomitic mesoderm in the posterior embryo. At stage 29, additionally expressed in the pronephric tubules. At stage 35, expressed in the migrating lateral muscle precursors of the abdomen. Additionally, the developing proctodeum and head structures including the branchial arches, eyes and otic vesicles continue to show expression. Expression also persists in the nephros.

It localises to the nucleus. Its subcellular location is the cytoplasm. Its function is as follows. Transcriptional regulator involved in different processes such as glucose metabolism, aerobic glycolysis and autophagy. Recognizes and binds the forkhead DNA sequence motif (5'-GTAAACA-3') and can both act as a transcription activator or repressor, depending on the context. Acts as a key regulator of metabolic reprogramming towards aerobic glycolysis, a process in which glucose is converted to lactate in the presence of oxygen. Acts as a negative regulator of autophagy in skeletal muscle: in response to starvation, enters the nucleus, binds the promoters of autophagy genes and represses their expression, preventing proteolysis of skeletal muscle proteins. The polypeptide is Forkhead box protein K2 (Xenopus laevis (African clawed frog)).